A 207-amino-acid chain; its full sequence is MKTKILNLANEEIGEISLNEDIFAVEFIRDDIIKQVVDWQRAKAMAGTHKTKTVSEVSGTTKKPFKQKGTGNARQGSLRSVQMRGGGVIHGPVVRSHATKLPKKVRKLGLIHALSEKFSEGKLLVIDSLKLETPKTSNLVNILNKFQGKSFFVIDGNEVDVNFSLAAQNIYNTVVVPQIGANVYDIIRHEYVLLSQEAVNVLEERLK.

The tract at residues 53–76 is disordered; sequence TVSEVSGTTKKPFKQKGTGNARQG.

The protein belongs to the universal ribosomal protein uL4 family. As to quaternary structure, part of the 50S ribosomal subunit.

Functionally, one of the primary rRNA binding proteins, this protein initially binds near the 5'-end of the 23S rRNA. It is important during the early stages of 50S assembly. It makes multiple contacts with different domains of the 23S rRNA in the assembled 50S subunit and ribosome. Its function is as follows. Forms part of the polypeptide exit tunnel. The sequence is that of Large ribosomal subunit protein uL4 from Rickettsia bellii (strain OSU 85-389).